The primary structure comprises 173 residues: Superoxide dismutase [Cu-Zn] 2 (173 aa).

Residues 1–19 (MKRLSLAMVTLLACAGAQA) form the signal peptide. His-67, His-69, and His-92 together coordinate Cu cation. Cys-74 and Cys-169 are oxidised to a cystine. Zn(2+)-binding residues include His-92, His-101, His-109, and Asp-112. His-147 lines the Cu cation pocket.

It belongs to the Cu-Zn superoxide dismutase family. In terms of assembly, monomer. It depends on Cu cation as a cofactor. Zn(2+) serves as cofactor.

It is found in the periplasm. It catalyses the reaction 2 superoxide + 2 H(+) = H2O2 + O2. Destroys radicals which are normally produced within the cells and which are toxic to biological systems. The polypeptide is Superoxide dismutase [Cu-Zn] 2 (sodC) (Salmonella typhimurium (strain LT2 / SGSC1412 / ATCC 700720)).